Here is a 108-residue protein sequence, read N- to C-terminus: Latartoxin-2c (108 aa).

Residues 1 to 19 (MKVLVITALCFILLQNVLG) form the signal peptide. Residues 20–42 (EDTYEDLQNYIENLINENQDEAR) constitute a propeptide, removed in mature form. The Processing quadruplet motif signature appears at 39-42 (DEAR). 4 disulfides stabilise this stretch: Cys-44–Cys-61, Cys-51–Cys-72, Cys-60–Cys-84, and Cys-74–Cys-82. At Ile-107 the chain carries Isoleucine amide.

It belongs to the neurotoxin 19 (CSTX) family. 11 (latartoxin) subfamily. In terms of processing, contains 4 disulfide bonds. Cleavage of the propeptide depends on the processing quadruplet motif (XXXR, with at least one of X being E). In terms of tissue distribution, expressed by the venom gland.

Its subcellular location is the secreted. Its function is as follows. Insect toxin. This is Latartoxin-2c from Lachesana tarabaevi (Spider).